Reading from the N-terminus, the 205-residue chain is Probable thymidylate kinase (205 aa).

Position 7–14 (7–14 (GIDGAGKS)) interacts with ATP.

This sequence belongs to the thymidylate kinase family.

It carries out the reaction dTMP + ATP = dTDP + ADP. The chain is Probable thymidylate kinase from Thermococcus kodakarensis (strain ATCC BAA-918 / JCM 12380 / KOD1) (Pyrococcus kodakaraensis (strain KOD1)).